The sequence spans 258 residues: Phosphonates import ATP-binding protein PhnC 3 (258 aa).

The 245-residue stretch at isoleucine 2–isoleucine 246 folds into the ABC transporter domain. Glycine 35–serine 42 contributes to the ATP binding site.

Belongs to the ABC transporter superfamily. Phosphonates importer (TC 3.A.1.9.1) family. In terms of assembly, the complex is composed of two ATP-binding proteins (PhnC), two transmembrane proteins (PhnE) and a solute-binding protein (PhnD).

Its subcellular location is the cell membrane. It carries out the reaction phosphonate(out) + ATP + H2O = phosphonate(in) + ADP + phosphate + H(+). In terms of biological role, part of the ABC transporter complex PhnCDE involved in phosphonates import. Responsible for energy coupling to the transport system. The protein is Phosphonates import ATP-binding protein PhnC 3 of Halalkalibacterium halodurans (strain ATCC BAA-125 / DSM 18197 / FERM 7344 / JCM 9153 / C-125) (Bacillus halodurans).